We begin with the raw amino-acid sequence, 180 residues long: Oligoribonuclease (180 aa).

An Exonuclease domain is found at 7-170 (LIWIDLEMTG…DDIRESIAEL (164 aa)). The active site involves Tyr-128.

Belongs to the oligoribonuclease family.

The protein localises to the cytoplasm. 3'-to-5' exoribonuclease specific for small oligoribonucleotides. This is Oligoribonuclease from Pseudomonas fluorescens (strain ATCC BAA-477 / NRRL B-23932 / Pf-5).